The chain runs to 1377 residues: DNA-directed RNA polymerase subunit beta'' (1377 aa).

Residues Cys220, Cys291, Cys298, and Cys301 each coordinate Zn(2+).

This sequence belongs to the RNA polymerase beta' chain family. RpoC2 subfamily. As to quaternary structure, in plastids the minimal PEP RNA polymerase catalytic core is composed of four subunits: alpha, beta, beta', and beta''. When a (nuclear-encoded) sigma factor is associated with the core the holoenzyme is formed, which can initiate transcription. It depends on Zn(2+) as a cofactor.

It is found in the plastid. Its subcellular location is the chloroplast. The enzyme catalyses RNA(n) + a ribonucleoside 5'-triphosphate = RNA(n+1) + diphosphate. Its function is as follows. DNA-dependent RNA polymerase catalyzes the transcription of DNA into RNA using the four ribonucleoside triphosphates as substrates. The sequence is that of DNA-directed RNA polymerase subunit beta'' from Nandina domestica (Heavenly bamboo).